Consider the following 177-residue polypeptide: Ribosome maturation factor RimP (177 aa).

The protein belongs to the RimP family.

It is found in the cytoplasm. Required for maturation of 30S ribosomal subunits. In Streptococcus sanguinis (strain SK36), this protein is Ribosome maturation factor RimP.